Consider the following 110-residue polypeptide: Large ribosomal subunit protein uL22 (110 aa).

The protein belongs to the universal ribosomal protein uL22 family. Part of the 50S ribosomal subunit.

In terms of biological role, this protein binds specifically to 23S rRNA; its binding is stimulated by other ribosomal proteins, e.g. L4, L17, and L20. It is important during the early stages of 50S assembly. It makes multiple contacts with different domains of the 23S rRNA in the assembled 50S subunit and ribosome. Its function is as follows. The globular domain of the protein is located near the polypeptide exit tunnel on the outside of the subunit, while an extended beta-hairpin is found that lines the wall of the exit tunnel in the center of the 70S ribosome. The chain is Large ribosomal subunit protein uL22 from Verminephrobacter eiseniae (strain EF01-2).